Consider the following 420-residue polypeptide: Histidine--tRNA ligase (420 aa).

Belongs to the class-II aminoacyl-tRNA synthetase family. In terms of assembly, homodimer.

It is found in the cytoplasm. The catalysed reaction is tRNA(His) + L-histidine + ATP = L-histidyl-tRNA(His) + AMP + diphosphate + H(+). The sequence is that of Histidine--tRNA ligase from Thermodesulfovibrio yellowstonii (strain ATCC 51303 / DSM 11347 / YP87).